Consider the following 389-residue polypeptide: Equilibrative nucleotide transporter 8 (389 aa).

10 helical membrane passes run 19–39, 57–77, 87–107, 119–139, 150–170, 187–207, 238–258, 266–286, 331–351, and 367–387; these read VAYV…NALI, TFTV…MTWN, NLGF…DWVW, LMVG…GSLI, MQAI…LRIA, HSYF…CNVL, WPAS…PGFI, LLQS…DFVG, VVVL…VLMI, and IFMV…GWLW.

Belongs to the SLC29A/ENT transporter (TC 2.A.57) family. As to expression, expressed in stems, flowers and siliques.

It localises to the cell membrane. Its function is as follows. May be involved in nucleoside transport. The chain is Equilibrative nucleotide transporter 8 (ETN8) from Arabidopsis thaliana (Mouse-ear cress).